The following is a 599-amino-acid chain: Sulfite reductase [NADPH] flavoprotein alpha-component (599 aa).

Positions 64–202 (ITIISASQTG…AASEWRARVV (139 aa)) constitute a Flavodoxin-like domain. Residues 70-75 (SQTGNA), 117-120 (STQG), and 153-162 (LGDSSYEFFC) each bind FMN. In terms of domain architecture, FAD-binding FR-type spans 234 to 448 (DAPLVASLSV…IEHNDNFRLP (215 aa)). FAD contacts are provided by residues Thr322, Ala356, 386–389 (RLYS), 404–406 (TVG), Tyr410, and 419–422 (GGAS). Residues 519–520 (SR), 525–529 (KVYVQ), and Asp561 each bind NADP(+). Tyr599 lines the FAD pocket.

It belongs to the NADPH-dependent sulphite reductase flavoprotein subunit CysJ family. In the N-terminal section; belongs to the flavodoxin family. This sequence in the C-terminal section; belongs to the flavoprotein pyridine nucleotide cytochrome reductase family. Alpha(8)-beta(8). The alpha component is a flavoprotein, the beta component is a hemoprotein. FAD is required as a cofactor. It depends on FMN as a cofactor.

The catalysed reaction is hydrogen sulfide + 3 NADP(+) + 3 H2O = sulfite + 3 NADPH + 4 H(+). The protein operates within sulfur metabolism; hydrogen sulfide biosynthesis; hydrogen sulfide from sulfite (NADPH route): step 1/1. Functionally, component of the sulfite reductase complex that catalyzes the 6-electron reduction of sulfite to sulfide. This is one of several activities required for the biosynthesis of L-cysteine from sulfate. The flavoprotein component catalyzes the electron flow from NADPH -&gt; FAD -&gt; FMN to the hemoprotein component. In Escherichia coli O157:H7, this protein is Sulfite reductase [NADPH] flavoprotein alpha-component.